Consider the following 31-residue polypeptide: Nemertide alpha-7 (31 aa).

Disulfide bonds link C2–C16, C9–C20, and C15–C26. Position 29 is a 4-hydroxyproline (P29).

The protein belongs to the nemertide family. Confined to the epidermis and to the mucus layer.

Its subcellular location is the secreted. Potent toxin, demonstrating strong inhibitory effects on insect sodium channels (Nav) and reduced activity on mammalian sodium channels. Potently inhibits inactivation of insect sodium channels of B.germanica (BgNav1) (EC(50)=9.5 nM). The toxin also delays the inactivation of most mammalian Nav (human Nav1.1/SCN1A; EC(50)=171.5 nM, rat Nav1.2/SCN2A; EC(50)=50.4 nM, rat Nav1.3/SCN3A; EC(50)=170.2 nM, rat Nav1.4/SCN4A; EC(50)=810.6 nM, human Nav1.5/SCN5A; EC(50)=155.6 nM, mouse Nav1.6/SCN8A; EC(50)=147.6 nM, human Nav1.9/SCN9A; EC(50)=129 nM). Inactivation is completely prevented by a concentration of 1 uM, resulting in sustained, non-inactivating currents. In addition, the toxin significantly enhances the recovery from inactivation, and the open state is not required for the toxin to interact with the channel. In vivo, injection into brine shrimp (Artemia salina) stops movement or causes death after 24 hours (EC(50)=6.1 uM). The chain is Nemertide alpha-7 from Lineus ruber (Red bootlace).